Consider the following 602-residue polypeptide: Probable translation initiation factor IF-2 (602 aa).

The tr-type G domain occupies 18–233 (LRTPIVCVMG…LVGLAQRFLK (216 aa)). Residues 27–34 (GHVDHGKT) are G1. 27–34 (GHVDHGKT) is a binding site for GTP. Positions 52–56 (AITQH) are G2. The interval 88 to 91 (DTPG) is G3. GTP-binding positions include 88–92 (DTPGH) and 142–145 (NKID). The G4 stretch occupies residues 142 to 145 (NKID). Residues 210–212 (SAI) are G5.

This sequence belongs to the TRAFAC class translation factor GTPase superfamily. Classic translation factor GTPase family. IF-2 subfamily.

Function in general translation initiation by promoting the binding of the formylmethionine-tRNA to ribosomes. Seems to function along with eIF-2. The chain is Probable translation initiation factor IF-2 from Methanothrix thermoacetophila (strain DSM 6194 / JCM 14653 / NBRC 101360 / PT) (Methanosaeta thermophila).